The chain runs to 182 residues: Photosystem I assembly protein Ycf4 (182 aa).

Transmembrane regions (helical) follow at residues 22–42 (WSSV…SSYL) and 63–83 (VMCF…LTIF).

The protein belongs to the Ycf4 family.

The protein localises to the plastid. Its subcellular location is the chloroplast thylakoid membrane. Its function is as follows. Seems to be required for the assembly of the photosystem I complex. The protein is Photosystem I assembly protein Ycf4 of Oltmannsiellopsis viridis (Marine flagellate).